The primary structure comprises 700 residues: Elongation factor G (700 aa).

The region spanning 8 to 290 (ERYRNIGISA…GVIDFMPSPI (283 aa)) is the tr-type G domain. GTP contacts are provided by residues 17-24 (AHIDAGKT), 88-92 (DTPGH), and 142-145 (NKMD).

The protein belongs to the TRAFAC class translation factor GTPase superfamily. Classic translation factor GTPase family. EF-G/EF-2 subfamily.

Its subcellular location is the cytoplasm. Functionally, catalyzes the GTP-dependent ribosomal translocation step during translation elongation. During this step, the ribosome changes from the pre-translocational (PRE) to the post-translocational (POST) state as the newly formed A-site-bound peptidyl-tRNA and P-site-bound deacylated tRNA move to the P and E sites, respectively. Catalyzes the coordinated movement of the two tRNA molecules, the mRNA and conformational changes in the ribosome. This chain is Elongation factor G, found in Methylibium petroleiphilum (strain ATCC BAA-1232 / LMG 22953 / PM1).